Reading from the N-terminus, the 581-residue chain is Protein phosphatase 2C 70 (581 aa).

Over 1–7 the chain is Extracellular; the sequence is MAMIGMN. Residues 8 to 28 traverse the membrane as a helical segment; the sequence is IIGLFMVLMLLLISLIILFAC. The Cytoplasmic portion of the chain corresponds to 29-581; the sequence is KPWRYFSRFR…IIYLDFDTSL (553 aa). The 52-residue stretch at 208-259 folds into the FHA domain; it reads VKLGRVSPSDLALKDSEVSGKHAQITWNSTKFKWELVDMGSLNGTLVNSHSI. The PPM-type phosphatase domain maps to 304-577; that stretch reads KIGVASDPMA…DNTSIIYLDF (274 aa). Mn(2+) is bound by residues Asp-346, Gly-347, Asp-521, and Asp-568.

Association of RLK5 with kapp domain is dependent on phosphorylation of RLK5 and can be abolished by dephosphorylation. Interacts with SERK1 and CDC48A. Component of the SERK1 signaling complex, composed of KAPP, CDC48A, GRF6 or GRF7, SERK1, SERK2, SERK3/BAK1 and BRI1. Interacts with CLV1. The cofactor is Mg(2+). Mn(2+) serves as cofactor. In terms of tissue distribution, expressed in all tissues examined.

The protein localises to the cell membrane. The catalysed reaction is O-phospho-L-seryl-[protein] + H2O = L-seryl-[protein] + phosphate. It catalyses the reaction O-phospho-L-threonyl-[protein] + H2O = L-threonyl-[protein] + phosphate. In terms of biological role, dephosphorylates the Ser/Thr receptor-like kinase RLK5. May function as a signaling component in a pathway involving RLK5. Binds and dephosphorylates CLAVATA1 (CLV1). Functions as a negative regulator of the CLV1 signaling in plant development. Dephosphorylates SERK1 receptor kinase on threonine residues in the A-loop. Dephosphorylation of SERK1 controls SERK1 internalization. Component of a signaling pathway which mediates adaptation to NaCl stress. Is not a component of the SALT OVERLY SENSITIVE (SOS) pathway. The protein is Protein phosphatase 2C 70 of Arabidopsis thaliana (Mouse-ear cress).